The sequence spans 186 residues: ATP synthase subunit delta (186 aa).

It belongs to the ATPase delta chain family. As to quaternary structure, F-type ATPases have 2 components, F(1) - the catalytic core - and F(0) - the membrane proton channel. F(1) has five subunits: alpha(3), beta(3), gamma(1), delta(1), epsilon(1). F(0) has three main subunits: a(1), b(2) and c(10-14). The alpha and beta chains form an alternating ring which encloses part of the gamma chain. F(1) is attached to F(0) by a central stalk formed by the gamma and epsilon chains, while a peripheral stalk is formed by the delta and b chains.

It localises to the cell inner membrane. Its function is as follows. F(1)F(0) ATP synthase produces ATP from ADP in the presence of a proton or sodium gradient. F-type ATPases consist of two structural domains, F(1) containing the extramembraneous catalytic core and F(0) containing the membrane proton channel, linked together by a central stalk and a peripheral stalk. During catalysis, ATP synthesis in the catalytic domain of F(1) is coupled via a rotary mechanism of the central stalk subunits to proton translocation. Functionally, this protein is part of the stalk that links CF(0) to CF(1). It either transmits conformational changes from CF(0) to CF(1) or is implicated in proton conduction. This is ATP synthase subunit delta from Wolbachia sp. subsp. Drosophila simulans (strain wRi).